Here is a 487-residue protein sequence, read N- to C-terminus: Melanopsin (487 aa).

The disordered stretch occupies residues 1–37; the sequence is MNPPSGPRTQEPSCVATPASPSRWDGYRSSTSSLDQP. At 1-67 the chain is on the extracellular side; the sequence is MNPPSGPRTQ…VDVPDHAHYT (67 aa). A helical membrane pass occupies residues 68–88; that stretch reads LGTVILLVGLTGILGNLMVIY. Over 89 to 102 the chain is Cytoplasmic; that stretch reads TFCRSRGLRTPANM. The helical transmembrane segment at 103–123 threads the bilayer; sequence FIINLAVSDFFMSFTQAPVFF. Topologically, residues 124–139 are extracellular; it reads ASSLHKRWLFGEAGCE. Residues C138 and C216 are joined by a disulfide bond. The chain crosses the membrane as a helical span at residues 140 to 160; the sequence is FYAFCGALFGITSMITLMAIA. At 161–183 the chain is on the cytoplasmic side; the sequence is LDRYLVITHPLATIGVVSKRRAA. Residues 184-204 traverse the membrane as a helical segment; that stretch reads LVLLGVWLYALAWSLPPFFGW. Residues 205-233 lie on the Extracellular side of the membrane; sequence SAYVPEGLLTSCSWDYMSFTPSVRAYTML. A helical transmembrane segment spans residues 234 to 254; it reads LFCFVFFLPLLVIVYCYIFIF. Residues 255–291 lie on the Cytoplasmic side of the membrane; sequence RAIRETGQALQTFRACEGGGRSPRQRQRLQREWKMAK. The chain crosses the membrane as a helical span at residues 292 to 312; the sequence is IELLVILLFVLSWAPYSIVAL. At 313-327 the chain is on the extracellular side; it reads MAFAGYAHVLTPYMN. A helical transmembrane segment spans residues 328–348; that stretch reads SVPAVIAKASAIHNPIIYAIT. N6-(retinylidene)lysine is present on K335. Residues 349 to 487 lie on the Cytoplasmic side of the membrane; that stretch reads HPKYRMAIAQ…LPLHPGWAFH (139 aa). The disordered stretch occupies residues 436 to 459; that stretch reads CSQGLEDREAKAPVRPQGREAETP. Residues 440–457 are compositionally biased toward basic and acidic residues; sequence LEDREAKAPVRPQGREAE.

The protein belongs to the G-protein coupled receptor 1 family. Opsin subfamily. Eye. Expression is restricted within the ganglion cell layer.

It localises to the cell membrane. It is found in the cell projection. The protein resides in the axon. Its subcellular location is the dendrite. The protein localises to the perikaryon. Functionally, photoreceptor that binds cis-retinaldehydes. Contributes to pupillar reflex, photoentrainment and other non-image forming responses to light. May be involved in the optokinetic visual tracking response. May be involved in the regulation of retinal hyaloid vessel growth and regression. The polypeptide is Melanopsin (OPN4) (Felis catus (Cat)).